The following is a 358-amino-acid chain: Popeye domain-containing protein 1 (358 aa).

The Extracellular segment spans residues 1–48 (MNSTESIPLAQSTVAGFTSELESLTPVPSNETTCENWREIHHLVFHVA). N-linked (GlcNAc...) asparagine glycosylation is found at asparagine 2 and asparagine 30. A helical transmembrane segment spans residues 49–69 (NVCFAVGLLIPTTLHLHMILL). A topological domain (cytoplasmic) is located at residue arginine 70. A helical transmembrane segment spans residues 71-91 (VMLSLGCTLYVVWATLYRCAL). Position 92 (aspartate 92) is a topological domain, extracellular. Residues 93 to 113 (VMIWNSVFLGINILHLSYLLY) traverse the membrane as a helical segment. A required for interaction with CAV3 region spans residues 93–115 (VMIWNSVFLGINILHLSYLLYKK). Residues 114 to 358 (KKRPVKIEKE…PDALKVHQLP (245 aa)) lie on the Cytoplasmic side of the membrane. The interval 136 to 186 (RVPPDLFRRLTGQFCMIQTLKRGQVYATEDKTSVDDRLSILLKGRMKVSYR) is required for interaction with KCNK2. Residues serine 295 and serine 318 each carry the phosphoserine modification. The span at 313–323 (SSSTASLPMSS) shows a compositional bias: low complexity. The segment at 313–350 (SSSTASLPMSSPQQRASAKMKPIEEGVEDDDEVFVSPD) is disordered.

The protein belongs to the popeye family. Homodimer. Homodimerization requires the C-terminus cytoplasmic region. Interacts (via the C-terminus cytoplasmic tail) with TJP1. Interacts (via the C-terminus cytoplasmic tail) with ARHGEF25/GEFT (via the DH domain). Interacts (via the C-terminus cytoplasmic tail) with VAMP3. Interacts with KCNK2; the interaction enhances KCNK2 surface expression and is inhibited by cAMP. Interacts with CAV3. Expressed in epithelial cells, skeletal muscle, heart and intestinal smooth muscle (at protein level). Expressed in fetal and adult heart and skeletal muscle.

Its subcellular location is the lateral cell membrane. The protein localises to the cell junction. The protein resides in the tight junction. It localises to the membrane. It is found in the cell membrane. Its subcellular location is the sarcolemma. The protein localises to the caveola. Functionally, cell adhesion molecule involved in the establishment and/or maintenance of cell integrity. Involved in the formation and regulation of the tight junction (TJ) paracellular permeability barrier in epithelial cells. Plays a role in VAMP3-mediated vesicular transport and recycling of different receptor molecules through its interaction with VAMP3. Plays a role in the regulation of cell shape and movement by modulating the Rho-family GTPase activity through its interaction with ARHGEF25/GEFT. Induces primordial adhesive contact and aggregation of epithelial cells in a Ca(2+)-independent manner. Also involved in striated muscle regeneration and repair and in the regulation of cell spreading. Important for the maintenance of cardiac function. Plays a regulatory function in heart rate dynamics mediated, at least in part, through cAMP-binding and, probably, by increasing cell surface expression of the potassium channel KCNK2 and enhancing current density. Is a caveolae-associated protein important for the preservation of caveolae structural and functional integrity as well as for heart protection against ischemia injury. The protein is Popeye domain-containing protein 1 of Mus musculus (Mouse).